The primary structure comprises 185 residues: Ribosome-recycling factor (185 aa).

This sequence belongs to the RRF family.

The protein resides in the cytoplasm. In terms of biological role, responsible for the release of ribosomes from messenger RNA at the termination of protein biosynthesis. May increase the efficiency of translation by recycling ribosomes from one round of translation to another. This is Ribosome-recycling factor from Pseudarthrobacter chlorophenolicus (strain ATCC 700700 / DSM 12829 / CIP 107037 / JCM 12360 / KCTC 9906 / NCIMB 13794 / A6) (Arthrobacter chlorophenolicus).